The following is a 175-amino-acid chain: MLDNPLIQQVLFEVMEEDVVGFDVLNVLIDSNEVTDDEISRQLEVKLNNIRRILYKLYEARLVDYNREKDEETNWYTYTWKPSLEKLPALVVKKMKNILDELKKQLSTEENGMFFYCMGCELKFTFEDAMDMGFRCPQCGGVLHEYDNKKDMATIKEQIAYIEDEFNQNPLFFKY.

In terms of domain architecture, HTH TFE/IIEalpha-type spans 3–88 (DNPLIQQVLF…TWKPSLEKLP (86 aa)).

This sequence belongs to the TFE family. Monomer. Interaction with RNA polymerase subunits RpoF and RpoE is necessary for Tfe stimulatory transcription activity. Able to interact with Tbp and RNA polymerase in the absence of DNA promoter. Interacts both with the preinitiation and elongation complexes.

In terms of biological role, transcription factor that plays a role in the activation of archaeal genes transcribed by RNA polymerase. Facilitates transcription initiation by enhancing TATA-box recognition by TATA-box-binding protein (Tbp), and transcription factor B (Tfb) and RNA polymerase recruitment. Not absolutely required for transcription in vitro, but particularly important in cases where Tbp or Tfb function is not optimal. It dynamically alters the nucleic acid-binding properties of RNA polymerases by stabilizing the initiation complex and destabilizing elongation complexes. Seems to translocate with the RNA polymerase following initiation and acts by binding to the non template strand of the transcription bubble in elongation complexes. The protein is Transcription factor E of Methanococcus vannielii (strain ATCC 35089 / DSM 1224 / JCM 13029 / OCM 148 / SB).